The chain runs to 208 residues: MTNKDESVKKNTESTVEETNVKQNIDDSVEQAEESKGHLQDEAIEETSDENVIEEIDPKDQKINELQQLADENEEKYLRLYAEFENYKRRIQKENEINKTYQAQRVLTDILPAIDNIERALQIEGDDETFKSLQKGVQMVHESLINALKDNGLEVIKTEGEAFDPNIHQAVVQDDNPDFESGEITQELQKGYKLKDRVLRPSMVKVNQ.

A compositionally biased stretch (basic and acidic residues) spans Met1 to Thr12. The segment at Met1–Asn51 is disordered. Positions Glu13–Gln23 are enriched in polar residues. The span at Glu42–Asn51 shows a compositional bias: acidic residues.

The protein belongs to the GrpE family. As to quaternary structure, homodimer.

The protein resides in the cytoplasm. Participates actively in the response to hyperosmotic and heat shock by preventing the aggregation of stress-denatured proteins, in association with DnaK and GrpE. It is the nucleotide exchange factor for DnaK and may function as a thermosensor. Unfolded proteins bind initially to DnaJ; upon interaction with the DnaJ-bound protein, DnaK hydrolyzes its bound ATP, resulting in the formation of a stable complex. GrpE releases ADP from DnaK; ATP binding to DnaK triggers the release of the substrate protein, thus completing the reaction cycle. Several rounds of ATP-dependent interactions between DnaJ, DnaK and GrpE are required for fully efficient folding. In Staphylococcus aureus (strain COL), this protein is Protein GrpE.